Consider the following 535-residue polypeptide: Putative transcription activator BRLF1 homolog (535 aa).

The disordered stretch occupies residues K384–F426. Positions R404–P419 are enriched in basic residues.

Belongs to the herpesviridae TAF50 family.

Functionally, transcription activation. Regulates the delayed-early 110 kDa promoter. This Saimiriine herpesvirus 2 (strain 11) (SaHV-2) protein is Putative transcription activator BRLF1 homolog (50).